A 247-amino-acid chain; its full sequence is UPF0280 protein MmarC7_0482 (247 aa).

This sequence belongs to the UPF0280 family.

The polypeptide is UPF0280 protein MmarC7_0482 (Methanococcus maripaludis (strain C7 / ATCC BAA-1331)).